The chain runs to 61 residues: Small ribosomal subunit protein uS14 (61 aa).

Cysteine 24, cysteine 27, cysteine 40, and cysteine 43 together coordinate Zn(2+).

The protein belongs to the universal ribosomal protein uS14 family. Zinc-binding uS14 subfamily. As to quaternary structure, part of the 30S ribosomal subunit. Contacts proteins S3 and S10. It depends on Zn(2+) as a cofactor.

Its function is as follows. Binds 16S rRNA, required for the assembly of 30S particles and may also be responsible for determining the conformation of the 16S rRNA at the A site. This Mycoplasmopsis pulmonis (strain UAB CTIP) (Mycoplasma pulmonis) protein is Small ribosomal subunit protein uS14.